Here is a 284-residue protein sequence, read N- to C-terminus: MEMO1 family protein Mevan_0697 (284 aa).

This sequence belongs to the MEMO1 family.

In Methanococcus vannielii (strain ATCC 35089 / DSM 1224 / JCM 13029 / OCM 148 / SB), this protein is MEMO1 family protein Mevan_0697.